Reading from the N-terminus, the 526-residue chain is Threonine synthase 1, chloroplastic (526 aa).

The transit peptide at 1-40 (MASSCLFNASVSSLNPKQDPIRRHRSTSLLRHRPVVISCT) directs the protein to the chloroplast. Residues 142–144 (PYG), 165–167 (SAF), Asn-172, Leu-173, Lys-181, and Asn-187 each bind S-adenosyl-L-methionine. Residue Lys-203 is modified to N6-(pyridoxal phosphate)lysine. Residues 335 to 339 (GNLGN) and Thr-472 contribute to the pyridoxal 5'-phosphate site.

Belongs to the threonine synthase family. As to quaternary structure, homodimer. Pyridoxal 5'-phosphate serves as cofactor.

The protein resides in the plastid. It localises to the chloroplast. It catalyses the reaction O-phospho-L-homoserine + H2O = L-threonine + phosphate. It functions in the pathway amino-acid biosynthesis; L-threonine biosynthesis; L-threonine from L-aspartate: step 5/5. Its activity is regulated as follows. Allosterically activated by S-adenosyl-L-methionine (SAM). Activated by S-adenosyl-L-ethionine, 5'-amino-5'-deoxyadenosine, sinefungin and 5'-deoxy-5-methylthioadenosine. Inhibited by AMP. Functionally, catalyzes the gamma-elimination of phosphate from L-phosphohomoserine and the beta-addition of water to produce L-threonine. This chain is Threonine synthase 1, chloroplastic (TS1), found in Arabidopsis thaliana (Mouse-ear cress).